Here is a 175-residue protein sequence, read N- to C-terminus: Co-chaperone protein HscB homolog (175 aa).

Residues 7–79 form the J domain; sequence SHFDLFHLPA…LQRASYLLSL (73 aa).

It belongs to the HscB family. In terms of assembly, interacts with HscA and stimulates its ATPase activity.

Its function is as follows. Co-chaperone involved in the maturation of iron-sulfur cluster-containing proteins. Seems to help targeting proteins to be folded toward HscA. This Burkholderia vietnamiensis (strain G4 / LMG 22486) (Burkholderia cepacia (strain R1808)) protein is Co-chaperone protein HscB homolog.